The primary structure comprises 96 residues: Co-chaperonin GroES (96 aa).

It belongs to the GroES chaperonin family. Heptamer of 7 subunits arranged in a ring. Interacts with the chaperonin GroEL.

It is found in the cytoplasm. In terms of biological role, together with the chaperonin GroEL, plays an essential role in assisting protein folding. The GroEL-GroES system forms a nano-cage that allows encapsulation of the non-native substrate proteins and provides a physical environment optimized to promote and accelerate protein folding. GroES binds to the apical surface of the GroEL ring, thereby capping the opening of the GroEL channel. The polypeptide is Co-chaperonin GroES (Thiobacillus denitrificans (strain ATCC 25259 / T1)).